The chain runs to 397 residues: Homocitrate synthase AksA (397 aa).

Residues 19 to 270 (VIVYDTTLRD…DPGFNTEVLA (252 aa)) form the Pyruvate carboxyltransferase domain.

Belongs to the alpha-IPM synthase/homocitrate synthase family.

The catalysed reaction is acetyl-CoA + 2-oxoglutarate + H2O = (2R)-homocitrate + CoA + H(+). It carries out the reaction 2-oxoadipate + acetyl-CoA + H2O = (R)-dihomocitrate + CoA + H(+). The enzyme catalyses 2-oxoheptanedioate + acetyl-CoA + H2O = (R)-trihomocitrate + CoA + H(+). It functions in the pathway organic acid metabolism; 2-oxosuberate biosynthesis. Catalyzes the condensation of alpha-ketoglutarate and acetyl-CoA to form (R)-homocitrate. Can also catalyze the condensation of alpha-ketoadipate with acetyl-CoA to form (R)-homo(2)citrate, and the condensation of alpha-ketopimelate with acetyl-CoA to form (R)-homo(3)citrate. These reactions are part of the biosynthesis pathway of coenzyme B and biotin. The polypeptide is Homocitrate synthase AksA (aksA) (Methanopyrus kandleri (strain AV19 / DSM 6324 / JCM 9639 / NBRC 100938)).